A 61-amino-acid chain; its full sequence is Photosystem II reaction center protein K (61 aa).

The propeptide occupies 1–24 (MINIVSLVCIYINSVPYSSIFFLD). A helical transmembrane segment spans residues 36 to 56 (IVDIMPVIPLFFFLLAFVWQA).

The protein belongs to the PsbK family. As to quaternary structure, PSII is composed of 1 copy each of membrane proteins PsbA, PsbB, PsbC, PsbD, PsbE, PsbF, PsbH, PsbI, PsbJ, PsbK, PsbL, PsbM, PsbT, PsbX, PsbY, PsbZ, Psb30/Ycf12, at least 3 peripheral proteins of the oxygen-evolving complex and a large number of cofactors. It forms dimeric complexes.

The protein resides in the plastid. The protein localises to the chloroplast thylakoid membrane. One of the components of the core complex of photosystem II (PSII). PSII is a light-driven water:plastoquinone oxidoreductase that uses light energy to abstract electrons from H(2)O, generating O(2) and a proton gradient subsequently used for ATP formation. It consists of a core antenna complex that captures photons, and an electron transfer chain that converts photonic excitation into a charge separation. This is Photosystem II reaction center protein K from Lotus japonicus (Lotus corniculatus var. japonicus).